The primary structure comprises 136 residues: Small ribosomal subunit protein uS12 (136 aa).

The disordered stretch occupies residues 1–28 (MPTIQQLIRSERQELKKKTKSPALKSCP). Asp89 bears the 3-methylthioaspartic acid mark. The interval 101-136 (TLDTAGVKDRKQGRSKYGAKRPKPGAASTASTGKKR) is disordered. A compositionally biased stretch (basic residues) spans 113–123 (GRSKYGAKRPK).

This sequence belongs to the universal ribosomal protein uS12 family. As to quaternary structure, part of the 30S ribosomal subunit. Contacts proteins S8 and S17. May interact with IF1 in the 30S initiation complex.

Its function is as follows. With S4 and S5 plays an important role in translational accuracy. Interacts with and stabilizes bases of the 16S rRNA that are involved in tRNA selection in the A site and with the mRNA backbone. Located at the interface of the 30S and 50S subunits, it traverses the body of the 30S subunit contacting proteins on the other side and probably holding the rRNA structure together. The combined cluster of proteins S8, S12 and S17 appears to hold together the shoulder and platform of the 30S subunit. The chain is Small ribosomal subunit protein uS12 from Cyanothece sp. (strain PCC 7425 / ATCC 29141).